Here is a 247-residue protein sequence, read N- to C-terminus: 1-(5-phosphoribosyl)-5-[(5-phosphoribosylamino)methylideneamino] imidazole-4-carboxamide isomerase (247 aa).

Residue Asp-8 is the Proton acceptor of the active site. The active-site Proton donor is the Asp-129.

This sequence belongs to the HisA/HisF family.

It localises to the cytoplasm. It carries out the reaction 1-(5-phospho-beta-D-ribosyl)-5-[(5-phospho-beta-D-ribosylamino)methylideneamino]imidazole-4-carboxamide = 5-[(5-phospho-1-deoxy-D-ribulos-1-ylimino)methylamino]-1-(5-phospho-beta-D-ribosyl)imidazole-4-carboxamide. The protein operates within amino-acid biosynthesis; L-histidine biosynthesis; L-histidine from 5-phospho-alpha-D-ribose 1-diphosphate: step 4/9. The chain is 1-(5-phosphoribosyl)-5-[(5-phosphoribosylamino)methylideneamino] imidazole-4-carboxamide isomerase from Bradyrhizobium sp. (strain BTAi1 / ATCC BAA-1182).